A 176-amino-acid polypeptide reads, in one-letter code: Parathyroid hormone-related protein (176 aa).

An N-terminal signal peptide occupies residues 1-25 (MMFTKLFQQWSFAVFLLSYSVPSYG). A propeptide spanning residues 26–37 (RSVEGISRRLKR) is cleaved from the precursor. The interval 58–69 (RIFLQNLIEGVN) is important for receptor binding. The disordered stretch occupies residues 76–157 (TSEVSPNPKP…WLNSGMYGSN (82 aa)). 2 stretches are compositionally biased toward polar residues: residues 77 to 91 (SEVS…NTKN) and 106 to 116 (TQETNKSQTYK). The short motif at 109–130 (TNKSQTYKEQPLKVSGKKKKAK) is the Nuclear localization signal element. Residues 123–133 (SGKKKKAKPGK) are compositionally biased toward basic residues.

This sequence belongs to the parathyroid hormone family.

The protein localises to the secreted. The protein resides in the cytoplasm. It is found in the nucleus. Neuroendocrine peptide which is a critical regulator of cellular and organ growth, development, migration, differentiation and survival and of epithelial calcium ion transport. Acts by binding to its receptor, PTH1R, activating G protein-coupled receptor signaling. Regulates endochondral bone development and epithelial-mesenchymal interactions during the formation of the mammary glands and teeth. Required for skeletal homeostasis. Functionally, potent inhibitor of osteoclastic bone resorption. This Gallus gallus (Chicken) protein is Parathyroid hormone-related protein (PTHLH).